A 78-amino-acid chain; its full sequence is Large ribosomal subunit protein bL28 (78 aa).

Positions 1–20 (MSRVCQVTGKGPVTGNNISH) are disordered.

Belongs to the bacterial ribosomal protein bL28 family.

In Pseudomonas fluorescens (strain ATCC BAA-477 / NRRL B-23932 / Pf-5), this protein is Large ribosomal subunit protein bL28.